The sequence spans 553 residues: Arginine--tRNA ligase (553 aa).

The short motif at 130 to 140 (ANPTGDLHIGH) is the 'HIGH' region element.

It belongs to the class-I aminoacyl-tRNA synthetase family. As to quaternary structure, monomer.

It localises to the cytoplasm. The enzyme catalyses tRNA(Arg) + L-arginine + ATP = L-arginyl-tRNA(Arg) + AMP + diphosphate. In Staphylococcus aureus (strain USA300 / TCH1516), this protein is Arginine--tRNA ligase.